Consider the following 206-residue polypeptide: MDLKDCKIYLVTDEKACNGKDFYKCIEESIKGGVKIVQLREKNISTKDFYKKALKVKEICKNYEVLFIINDRLDITQAVEADGVHLGQSDMPIEKAREILKDKFLIGATARNIEEAEKAQLLGADYIGSGAIFGTSTKDNAKRLEMEDLKKIVNSVKIPVFAIGGININNVWMLKNIGLQGVCSVSGILSEKDCKKAVENILKNFN.

4-amino-2-methyl-5-(diphosphooxymethyl)pyrimidine contacts are provided by residues 38–42 and Asn-70; that span reads QLREK. 2 residues coordinate Mg(2+): Asp-71 and Asp-90. Thr-109 provides a ligand contact to 4-amino-2-methyl-5-(diphosphooxymethyl)pyrimidine. 135–137 contributes to the 2-[(2R,5Z)-2-carboxy-4-methylthiazol-5(2H)-ylidene]ethyl phosphate binding site; the sequence is TST. Lys-138 is a 4-amino-2-methyl-5-(diphosphooxymethyl)pyrimidine binding site. 2-[(2R,5Z)-2-carboxy-4-methylthiazol-5(2H)-ylidene]ethyl phosphate-binding positions include Gly-165 and 185–186; that span reads VS.

This sequence belongs to the thiamine-phosphate synthase family. The cofactor is Mg(2+).

The catalysed reaction is 2-[(2R,5Z)-2-carboxy-4-methylthiazol-5(2H)-ylidene]ethyl phosphate + 4-amino-2-methyl-5-(diphosphooxymethyl)pyrimidine + 2 H(+) = thiamine phosphate + CO2 + diphosphate. It catalyses the reaction 2-(2-carboxy-4-methylthiazol-5-yl)ethyl phosphate + 4-amino-2-methyl-5-(diphosphooxymethyl)pyrimidine + 2 H(+) = thiamine phosphate + CO2 + diphosphate. It carries out the reaction 4-methyl-5-(2-phosphooxyethyl)-thiazole + 4-amino-2-methyl-5-(diphosphooxymethyl)pyrimidine + H(+) = thiamine phosphate + diphosphate. The protein operates within cofactor biosynthesis; thiamine diphosphate biosynthesis; thiamine phosphate from 4-amino-2-methyl-5-diphosphomethylpyrimidine and 4-methyl-5-(2-phosphoethyl)-thiazole: step 1/1. Condenses 4-methyl-5-(beta-hydroxyethyl)thiazole monophosphate (THZ-P) and 2-methyl-4-amino-5-hydroxymethyl pyrimidine pyrophosphate (HMP-PP) to form thiamine monophosphate (TMP). The sequence is that of Thiamine-phosphate synthase from Fusobacterium nucleatum subsp. nucleatum (strain ATCC 25586 / DSM 15643 / BCRC 10681 / CIP 101130 / JCM 8532 / KCTC 2640 / LMG 13131 / VPI 4355).